An 881-amino-acid polypeptide reads, in one-letter code: Armadillo repeat-containing protein 3 (881 aa).

ARM repeat units lie at residues 15-54 (DVFDPITIESKKAATVVLMLKSPEEDILAKACEAIYKFAL), 57-96 (EENKATLLELGAVEPLTKLLTHEDKTVRRNAMMIFGILAS), 98-138 (SDVK…NMSV), 140-179 (YTGKVQIFEHGGLEPLIRLLSSSDPDVKKNSIECIYNLVQ), 181-220 (FQCRTTLQELNAIPPILELLRSEYPIIQLLALKTLGVITC), 222-262 (KEAR…NCLE), 264-304 (MDTM…KAAY), 306-345 (PENRKVFHEQEVEKCLVTLLGSDSDGTKIAASQAISALCE), 346-385 (NLSCKEFFNTQGIPQIVQLLRSDNEEVREAAALALANLTT), 388-427 (PANANAAAEADAIDPLINILSSKRDGAIANAATVLTNMAT), 429-468 (EPLRAIIQNHEIMHALLGPLHSTNTLVQSTAALTVAATAC), and 470-509 (VEARTQLRNCGGLVPLVGLLHSKNDEVRRHASWAVMVCAG). 2 S-palmitoyl cysteine lipidation sites follow: cysteine 507 and cysteine 518. Residues 605-659 (NNKSDTSPPPSMEDKSSDVGYGRSISSSSSLRRGSKEKANAIFGSPTEEKSEPAS) form a disordered region. Residues 622 to 636 (DVGYGRSISSSSSLR) are compositionally biased toward low complexity.

In terms of assembly, homodimer. Interacts with PIK3C3, PIK3R4 and BECN1. Interacts (via ARM domains) with ATG14. In terms of processing, palmitoylation is important for its function in autophagy. As to expression, testis-specific.

In terms of biological role, essential for male fertility and sperm motility. During spermatogenesis, promotes the autophagic degradation of excessive ribosomes, providing energy resources for mitochondria and thus ensuring sperm flagellar motility. The protein is Armadillo repeat-containing protein 3 (Armc3) of Mus musculus (Mouse).